The primary structure comprises 59 residues: Large ribosomal subunit protein bL32 (59 aa).

The span at 1–16 (MAVPKRKTSPSKRGMR) shows a compositional bias: basic residues. Residues 1–59 (MAVPKRKTSPSKRGMRRSADALKAPTYIEDKNSGELRRPHHIDLKTGMYRGRSVLPPKD) form a disordered region. Over residues 28–44 (IEDKNSGELRRPHHIDL) the composition is skewed to basic and acidic residues.

The protein belongs to the bacterial ribosomal protein bL32 family.

This chain is Large ribosomal subunit protein bL32, found in Bartonella quintana (strain Toulouse) (Rochalimaea quintana).